A 94-amino-acid polypeptide reads, in one-letter code: MNIYDILKKPLVTEKTTLEKDAKNVISFEVDRSANKIEIKNAVEKLFKVEVSEVNTVNVAGKLKRVGRHYGKRSNWKKAYVTLKEGNNVDFFEI.

It belongs to the universal ribosomal protein uL23 family. Part of the 50S ribosomal subunit. Contacts protein L29, and trigger factor when it is bound to the ribosome.

In terms of biological role, one of the early assembly proteins it binds 23S rRNA. One of the proteins that surrounds the polypeptide exit tunnel on the outside of the ribosome. Forms the main docking site for trigger factor binding to the ribosome. This chain is Large ribosomal subunit protein uL23, found in Geobacter metallireducens (strain ATCC 53774 / DSM 7210 / GS-15).